The primary structure comprises 171 residues: 3-hydroxydecanoyl-[acyl-carrier-protein] dehydratase (171 aa).

Histidine 70 is an active-site residue.

Belongs to the thioester dehydratase family. FabA subfamily. In terms of assembly, homodimer.

The protein localises to the cytoplasm. It carries out the reaction a (3R)-hydroxyacyl-[ACP] = a (2E)-enoyl-[ACP] + H2O. It catalyses the reaction (3R)-hydroxydecanoyl-[ACP] = (2E)-decenoyl-[ACP] + H2O. The catalysed reaction is (2E)-decenoyl-[ACP] = (3Z)-decenoyl-[ACP]. Its pathway is lipid metabolism; fatty acid biosynthesis. In terms of biological role, necessary for the introduction of cis unsaturation into fatty acids. Catalyzes the dehydration of (3R)-3-hydroxydecanoyl-ACP to E-(2)-decenoyl-ACP and then its isomerization to Z-(3)-decenoyl-ACP. Can catalyze the dehydratase reaction for beta-hydroxyacyl-ACPs with saturated chain lengths up to 16:0, being most active on intermediate chain length. In Xanthomonas euvesicatoria pv. vesicatoria (strain 85-10) (Xanthomonas campestris pv. vesicatoria), this protein is 3-hydroxydecanoyl-[acyl-carrier-protein] dehydratase.